Reading from the N-terminus, the 52-residue chain is Disintegrin multisquamatin (52 aa).

The Disintegrin domain occupies 1–50; the sequence is EGEECESGPCCRNCKFLKEGTICKRARGDDMDDYCNGKTCDCPRNPHKGP. Cystine bridges form between Cys-5/Cys-14, Cys-10/Cys-35, Cys-11/Cys-40, and Cys-23/Cys-42. Positions 27-29 match the Cell attachment site motif; the sequence is RGD.

The protein belongs to the venom metalloproteinase (M12B) family. P-II subfamily. P-IIa sub-subfamily. As to quaternary structure, monomer. In terms of tissue distribution, expressed by the venom gland.

The protein resides in the secreted. Its function is as follows. Inhibits ADP-induced human, canine and rabbit platelet aggregation by binding with high affinity to alpha-IIb/beta-3 (ITGA2B/ITGB3). This chain is Disintegrin multisquamatin, found in Echis multisquamatus (Central Asian sand viper).